The primary structure comprises 817 residues: Tax1-binding protein 1 homolog (817 aa).

Ser-124 and Ser-138 each carry phosphoserine. Positions 144-628 form a coiled coil; it reads TTKAGLLELK…ENQAERKLEG (485 aa). Residues 320–420 are oligomerization; sequence EEISRLQFSL…ELKLSAVNKD (101 aa). Residues 609 to 627 are compositionally biased toward basic and acidic residues; it reads SREKEHKRSVENQAERKLE. The interval 609–685 is disordered; the sequence is SREKEHKRSV…ADGAFYPDEI (77 aa). Phosphoserine; by IKKA is present on Ser-617. Over residues 628 to 643 the composition is skewed to polar residues; it reads GQNSQSPHQISQCLKT. Ser-633 is subject to Phosphoserine. Ser-694 carries the phosphoserine; by IKKA modification. The tract at residues 704–742 is disordered; sequence SQPARNLSRPDGLEDPEDSKEDEKVPTAPDPPSQHLRGH. 2 consecutive UBZ1-type zinc fingers follow at residues 755–781 and 782–808; these read QKKC…VESH and WKVC…VQTH. Residues Cys-758, Cys-761, His-777, His-781, Cys-785, Cys-788, His-804, and His-808 each contribute to the Zn(2+) site.

As to quaternary structure, homooligomer. Interacts with TNFAIP3. Interacts with STARD13. Interacts with MYO6. Interacts with TOM1; the interaction is indirect and is mediated by MYO6, which acts as a bridge between TOM1 and TAX1BP1. Interacts with MAVS; this interaction induces MAVS polyubiquitination. Interacts with TNIP1. Interacts with TRAF6; this interaction mediates deubiquitination of TRAF6 and inhibition of NF-kappa-B activation. Interacts with RIPK1; this interaction negatively regulates RIPK1 ubiquitination. Interacts with NBR1. Interacts with TBK1. Interacts with RB1CC1. Interacts with SQSTM1. Interacts with AZI2. Post-translationally, phosphorylated in the C-terminal region by CHUK/IKKA leading to NF-kappa-B signaling down-regulation.

The protein localises to the cytoplasm. Its subcellular location is the mitochondrion. The protein resides in the preautophagosomal structure. It localises to the cytoplasmic vesicle. It is found in the autophagosome. In terms of biological role, ubiquitin-binding adapter that participates in inflammatory, antiviral and innate immune processes as well as selective autophagy regulation. Plays a key role in the negative regulation of NF-kappa-B and IRF3 signalings by acting as an adapter for the ubiquitin-editing enzyme A20/TNFAIP3 to bind and inactivate its substrates. Disrupts the interactions between the E3 ubiquitin ligase TRAF3 and TBK1/IKBKE to attenuate 'Lys63'-linked polyubiquitination of TBK1 and thereby IFN-beta production. Also recruits A20/TNFAIP3 to ubiquitinated signaling proteins TRAF6 and RIPK1, leading to their deubiquitination and disruption of IL-1 and TNF-induced NF-kappa-B signaling pathways. Inhibits virus-induced apoptosis by inducing the 'Lys-48'-linked polyubiquitination and degradation of MAVS via recruitment of the E3 ligase ITCH, thereby attenuating MAVS-mediated apoptosis signaling. As a macroautophagy/autophagy receptor, facilitates the xenophagic clearance of pathogenic bacteria such as Salmonella typhimurium and Mycobacterium tuberculosis. Upon NBR1 recruitment to the SQSTM1-ubiquitin condensates, acts as the major recruiter of RB1CC1 to these ubiquitin condensates to promote their autophagic degradation. The polypeptide is Tax1-binding protein 1 homolog (TAX1BP1) (Bos taurus (Bovine)).